The sequence spans 200 residues: NADH-quinone oxidoreductase subunit C (200 aa).

The protein belongs to the complex I 30 kDa subunit family. NDH-1 is composed of 14 different subunits. Subunits NuoB, C, D, E, F, and G constitute the peripheral sector of the complex.

It is found in the cell inner membrane. The catalysed reaction is a quinone + NADH + 5 H(+)(in) = a quinol + NAD(+) + 4 H(+)(out). Its function is as follows. NDH-1 shuttles electrons from NADH, via FMN and iron-sulfur (Fe-S) centers, to quinones in the respiratory chain. The immediate electron acceptor for the enzyme in this species is believed to be ubiquinone. Couples the redox reaction to proton translocation (for every two electrons transferred, four hydrogen ions are translocated across the cytoplasmic membrane), and thus conserves the redox energy in a proton gradient. In Parvibaculum lavamentivorans (strain DS-1 / DSM 13023 / NCIMB 13966), this protein is NADH-quinone oxidoreductase subunit C.